The primary structure comprises 434 residues: Innexin-14 (434 aa).

The next 4 helical transmembrane spans lie at 30-50 (LFTV…QHFG), 106-126 (WVPF…WCWA), 301-321 (IFIG…IGTV), and 365-385 (YLCA…GFLK).

It belongs to the pannexin family.

Its subcellular location is the cell membrane. It localises to the cell junction. The protein resides in the gap junction. Its function is as follows. Structural component of the gap junctions. This chain is Innexin-14 (inx-14), found in Caenorhabditis elegans.